We begin with the raw amino-acid sequence, 50 residues long: uncharacterized protein (50 aa).

This is an uncharacterized protein from Bacillus subtilis (strain 168).